The chain runs to 184 residues: Dual-action ribosomal maturation protein DarP (184 aa).

The disordered stretch occupies residues 1 to 21; it reads MYKHPDEEWLDEIPGQQENED.

Belongs to the DarP family.

Its subcellular location is the cytoplasm. Its function is as follows. Member of a network of 50S ribosomal subunit biogenesis factors which assembles along the 30S-50S interface, preventing incorrect 23S rRNA structures from forming. Promotes peptidyl transferase center (PTC) maturation. The polypeptide is Dual-action ribosomal maturation protein DarP (Edwardsiella ictaluri (strain 93-146)).